The primary structure comprises 148 residues: Large ribosomal subunit protein uL15 (148 aa).

Residues 1-47 are disordered; the sequence is MAFSLENLRPAPGSRPKSKRVGRGSSSGKGKTSSRGHKGQGRGTGKV.

It belongs to the universal ribosomal protein uL15 family. As to quaternary structure, part of the 50S ribosomal subunit.

In terms of biological role, binds to the 23S rRNA. This Kosmotoga olearia (strain ATCC BAA-1733 / DSM 21960 / TBF 19.5.1) protein is Large ribosomal subunit protein uL15.